A 149-amino-acid chain; its full sequence is Calmodulin (149 aa).

An N-acetylalanine modification is found at alanine 2. 4 consecutive EF-hand domains span residues 8–43 (EQIA…LGQN), 44–79 (PTEA…KMKD), 81–116 (DSEE…LGEK), and 117–149 (LTDE…MTAK). Residues aspartate 21, aspartate 23, aspartate 25, threonine 27, glutamate 32, aspartate 59, asparagine 61, threonine 63, glutamate 68, aspartate 94, aspartate 96, asparagine 98, tyrosine 100, and glutamate 105 each coordinate Ca(2+). Lysine 116 carries the post-translational modification N6,N6,N6-trimethyllysine. Ca(2+) is bound by residues aspartate 130, aspartate 132, aspartate 134, glutamine 136, and glutamate 141.

This sequence belongs to the calmodulin family.

Functionally, calmodulin acts as part of a calcium signal transduction pathway by mediating the control of a large number of enzymes, ion channels, aquaporins and other proteins through calcium-binding. Calcium-binding is required for the activation of calmodulin. Among the enzymes to be stimulated by the calmodulin-calcium complex are a number of protein kinases, such as myosin light-chain kinases and calmodulin-dependent protein kinase type II (CaMK2), and phosphatases. The sequence is that of Calmodulin from Myxine glutinosa (Atlantic hagfish).